The primary structure comprises 168 residues: Alpha-N-acetylgalactosamine-specific lectin (168 aa).

An N-terminal signal peptide occupies residues 1–18 (MAFFRALCFVLLVGFAAA). One can recognise a C-type lectin domain in the interval 38–163 (YNGNCYRYFG…CSRAFAYVCK (126 aa)). 2 disulfide bridges follow: Cys-59-Cys-162 and Cys-136-Cys-154.

In terms of assembly, monomer, homodimer and homooligomer.

In terms of biological role, alpha-N-acetylgalactosamine-specific lectin. The oligomeric form has Ca(2+)-dependent hemagglutination activity towards sheep erythrocytes. Its hemagglutination activity is inhibited by various monosaccharides, oligosaccharides and glycopeptides, including inhibition by GalNAc, blood group A trisaccharide, Tn antigen, mucin and asialomucin. The polypeptide is Alpha-N-acetylgalactosamine-specific lectin (Patiria pectinifera (Starfish)).